A 469-amino-acid polypeptide reads, in one-letter code: UDP-N-acetylmuramate--L-alanine ligase (469 aa).

118–124 (GTHGKTT) provides a ligand contact to ATP.

Belongs to the MurCDEF family.

The protein localises to the cytoplasm. The enzyme catalyses UDP-N-acetyl-alpha-D-muramate + L-alanine + ATP = UDP-N-acetyl-alpha-D-muramoyl-L-alanine + ADP + phosphate + H(+). It functions in the pathway cell wall biogenesis; peptidoglycan biosynthesis. Its function is as follows. Cell wall formation. In Lachnoclostridium phytofermentans (strain ATCC 700394 / DSM 18823 / ISDg) (Clostridium phytofermentans), this protein is UDP-N-acetylmuramate--L-alanine ligase.